The primary structure comprises 180 residues: Inner membrane-spanning protein YciB (180 aa).

The next 5 helical transmembrane spans lie at 22–42, 50–70, 76–96, 121–141, and 149–169; these read IYVA…LTWL, MTLI…VFHN, WKVT…QVVL, AAWA…AFWL, and FKVF…GIYI.

It belongs to the YciB family.

Its subcellular location is the cell inner membrane. In terms of biological role, plays a role in cell envelope biogenesis, maintenance of cell envelope integrity and membrane homeostasis. The chain is Inner membrane-spanning protein YciB from Edwardsiella ictaluri (strain 93-146).